Consider the following 559-residue polypeptide: Large neutral amino acids transporter small subunit 3 (559 aa).

The helical transmembrane segment at 20–40 (VLENLFFSAVLLGWGSLLIIL) threads the bilayer. An N-linked (GlcNAc...) asparagine glycan is attached at N57. 5 helical membrane-spanning segments follow: residues 78 to 98 (LGFTIGSFVLSATTLPLGILM), 105 to 124 (PVRLVGSACFTASCTLMALA), 131 to 151 (LSPLIFLALSLNGFGGICLTF), 168 to 188 (MALMIGSYASSAITFPGIKLI), and 191 to 211 (AGVAFVVIMFTWSGLACLIFL). N212 and N229 each carry an N-linked (GlcNAc...) asparagine glycan. Phosphoserine is present on residues S237, S262, and S267. The next 6 helical transmembrane spans lie at 304–324 (FLWSLLTMGMTQLRIIFYMAA), 357–377 (SVFGAMQLLCLLTCPLIGYIM), 419–439 (AISAFTLTNLLLVGFGITCLI), 446–466 (FVTFVLHTIVRGFFHSACGSL), 485–505 (LISAVFALLQQPLFMAMVGPL), and 510–530 (FWVNLGLLLFSLLGFLLPSYL).

It belongs to the SLC43A transporter (TC 2.A.1.44) family. As to expression, ubiquitously expressed in fetus and adult. Highest expression in adult pancreas, liver, skeletal muscle. In fetus, highest expression in liver and lower levels in kidney, and lung. Exclusively expressed in the glomeruli along the glomerular capillary walls.

It localises to the cell membrane. The protein resides in the apical cell membrane. Its subcellular location is the endoplasmic reticulum membrane. It catalyses the reaction D-leucine(in) = D-leucine(out). The enzyme catalyses L-leucine(in) = L-leucine(out). The catalysed reaction is L-isoleucine(in) = L-isoleucine(out). It carries out the reaction L-methionine(in) = L-methionine(out). It catalyses the reaction L-phenylalanine(in) = L-phenylalanine(out). The enzyme catalyses L-valine(in) = L-valine(out). Uniport that mediates the transport of neutral amino acids such as L-leucine, L-isoleucine, L-valine, and L-phenylalanine. The transport activity is sodium ions-independent, electroneutral and mediated by a facilitated diffusion. The protein is Large neutral amino acids transporter small subunit 3 of Homo sapiens (Human).